Consider the following 325-residue polypeptide: Probable exonuclease subunit 1 (325 aa).

Could consist of two subunits: D13 and D12.

Its function is as follows. Possible exonuclease involved in phage DNA recombination, replication, and repair. In Escherichia coli (Enterobacteria phage T5), this protein is Probable exonuclease subunit 1 (D12).